A 423-amino-acid chain; its full sequence is Innexin eat-5 (423 aa).

The next 4 helical transmembrane spans lie at 25–41 (YYYS…TITA), 102–122 (PFIM…WSML), 277–297 (IFLF…FDSI), and 341–361 (HSIL…IILL).

This sequence belongs to the pannexin family. In terms of assembly, heterooligomer of eat-5 and another innexin. In terms of tissue distribution, expressed in pharyngeal muscles.

It localises to the cell membrane. The protein localises to the cell junction. The protein resides in the gap junction. Its function is as follows. Structural component of the gap junctions. Required for synchronized pharyngeal muscle contractions. This chain is Innexin eat-5 (eat-5), found in Caenorhabditis elegans.